Here is a 584-residue protein sequence, read N- to C-terminus: Aspartate--tRNA(Asp/Asn) ligase (584 aa).

Position 177 (glutamate 177) interacts with L-aspartate. Positions 201–204 are aspartate; that stretch reads QLFK. Position 223 (arginine 223) interacts with L-aspartate. ATP is bound by residues 223-225 and glutamine 232; that span reads RDE. Histidine 447 is an L-aspartate binding site. Glutamate 481 is an ATP binding site. Position 488 (arginine 488) interacts with L-aspartate. 533 to 536 serves as a coordination point for ATP; that stretch reads GLDR.

Belongs to the class-II aminoacyl-tRNA synthetase family. Type 1 subfamily. In terms of assembly, homodimer.

It localises to the cytoplasm. It catalyses the reaction tRNA(Asx) + L-aspartate + ATP = L-aspartyl-tRNA(Asx) + AMP + diphosphate. Aspartyl-tRNA synthetase with relaxed tRNA specificity since it is able to aspartylate not only its cognate tRNA(Asp) but also tRNA(Asn). Reaction proceeds in two steps: L-aspartate is first activated by ATP to form Asp-AMP and then transferred to the acceptor end of tRNA(Asp/Asn). In Chlamydia caviae (strain ATCC VR-813 / DSM 19441 / 03DC25 / GPIC) (Chlamydophila caviae), this protein is Aspartate--tRNA(Asp/Asn) ligase.